We begin with the raw amino-acid sequence, 300 residues long: GTPase Era (300 aa).

Residues R8–E176 enclose the Era-type G domain. Residues G16–S23 form a G1 region. G16–S23 is a binding site for GTP. The interval Q42–H46 is G2. The tract at residues D63–G66 is G3. Residues D63–M67 and N125–D128 contribute to the GTP site. Positions N125 to D128 are G4. A G5 region spans residues I155 to A157. Residues V199 to G283 form the KH type-2 domain.

It belongs to the TRAFAC class TrmE-Era-EngA-EngB-Septin-like GTPase superfamily. Era GTPase family. Monomer.

Its subcellular location is the cytoplasm. It is found in the cell inner membrane. Its function is as follows. An essential GTPase that binds both GDP and GTP, with rapid nucleotide exchange. Plays a role in 16S rRNA processing and 30S ribosomal subunit biogenesis and possibly also in cell cycle regulation and energy metabolism. The protein is GTPase Era of Pseudomonas savastanoi pv. phaseolicola (strain 1448A / Race 6) (Pseudomonas syringae pv. phaseolicola (strain 1448A / Race 6)).